Consider the following 287-residue polypeptide: Acetylglutamate kinase (287 aa).

Substrate is bound by residues 65-66, Arg-87, and Asn-181; that span reads GG.

The protein belongs to the acetylglutamate kinase family. ArgB subfamily.

It localises to the cytoplasm. The catalysed reaction is N-acetyl-L-glutamate + ATP = N-acetyl-L-glutamyl 5-phosphate + ADP. It functions in the pathway amino-acid biosynthesis; L-arginine biosynthesis; N(2)-acetyl-L-ornithine from L-glutamate: step 2/4. Catalyzes the ATP-dependent phosphorylation of N-acetyl-L-glutamate. In Syntrophomonas wolfei subsp. wolfei (strain DSM 2245B / Goettingen), this protein is Acetylglutamate kinase.